A 130-amino-acid polypeptide reads, in one-letter code: Small ribosomal subunit protein uS8 (130 aa).

It belongs to the universal ribosomal protein uS8 family. As to quaternary structure, part of the 30S ribosomal subunit. Contacts proteins S5 and S12.

Its function is as follows. One of the primary rRNA binding proteins, it binds directly to 16S rRNA central domain where it helps coordinate assembly of the platform of the 30S subunit. This is Small ribosomal subunit protein uS8 from Yersinia enterocolitica serotype O:8 / biotype 1B (strain NCTC 13174 / 8081).